A 139-amino-acid polypeptide reads, in one-letter code: Protein GOS9 (139 aa).

The Jacalin-type lectin domain occupies 5 to 139 (LVKIGTWGGN…VDSIGVYVHI (135 aa)).

In terms of tissue distribution, expressed mainly in roots.

This is Protein GOS9 (GOS9) from Oryza sativa subsp. indica (Rice).